A 578-amino-acid chain; its full sequence is Longifolene synthase (578 aa).

Asp-331, Asp-335, and Asp-475 together coordinate Mg(2+). The short motif at 331 to 335 (DDLYD) is the DDXXD motif element.

It belongs to the terpene synthase family. Tpsd subfamily. Mg(2+) is required as a cofactor. The cofactor is Mn(2+).

It localises to the cytoplasm. It catalyses the reaction (2E,6E)-farnesyl diphosphate = longifolene + diphosphate. It participates in sesquiterpene biosynthesis. Its pathway is terpene metabolism; oleoresin biosynthesis. Functionally, involved in defensive oleoresin formation in conifers in response to insect attack or other injury. Involved in sesquiterpene (C15) olefins biosynthesis. Produces mainly longifolene, but also multiple minor products including alpha-longipinene, alpha-longicyclene, E-beta-farnesene, longiborneol, cyclosativene, beta-longipinene, and 12 other sesquiterpenes when used with farnesyl diphosphate (FPP) as substrate. The protein is Longifolene synthase (TPS-Lon) of Picea abies (Norway spruce).